Consider the following 118-residue polypeptide: Large ribosomal subunit protein bL20 (118 aa).

The protein belongs to the bacterial ribosomal protein bL20 family.

Functionally, binds directly to 23S ribosomal RNA and is necessary for the in vitro assembly process of the 50S ribosomal subunit. It is not involved in the protein synthesizing functions of that subunit. This Desulforamulus reducens (strain ATCC BAA-1160 / DSM 100696 / MI-1) (Desulfotomaculum reducens) protein is Large ribosomal subunit protein bL20.